Here is a 482-residue protein sequence, read N- to C-terminus: tRNA sulfurtransferase (482 aa).

Residues 61–165 (NQVLTAVTHT…NEKLNLVIAR (105 aa)) form the THUMP domain. ATP-binding positions include 183 to 184 (LI), lysine 265, glycine 287, and glutamine 296. Cysteine 344 and cysteine 456 are oxidised to a cystine. The region spanning 404-482 (LGSDVVVLDI…GYKNVKVYRP (79 aa)) is the Rhodanese domain. Cysteine 456 (cysteine persulfide intermediate) is an active-site residue.

It belongs to the ThiI family.

It is found in the cytoplasm. The enzyme catalyses [ThiI sulfur-carrier protein]-S-sulfanyl-L-cysteine + a uridine in tRNA + 2 reduced [2Fe-2S]-[ferredoxin] + ATP + H(+) = [ThiI sulfur-carrier protein]-L-cysteine + a 4-thiouridine in tRNA + 2 oxidized [2Fe-2S]-[ferredoxin] + AMP + diphosphate. It carries out the reaction [ThiS sulfur-carrier protein]-C-terminal Gly-Gly-AMP + S-sulfanyl-L-cysteinyl-[cysteine desulfurase] + AH2 = [ThiS sulfur-carrier protein]-C-terminal-Gly-aminoethanethioate + L-cysteinyl-[cysteine desulfurase] + A + AMP + 2 H(+). The protein operates within cofactor biosynthesis; thiamine diphosphate biosynthesis. In terms of biological role, catalyzes the ATP-dependent transfer of a sulfur to tRNA to produce 4-thiouridine in position 8 of tRNAs, which functions as a near-UV photosensor. Also catalyzes the transfer of sulfur to the sulfur carrier protein ThiS, forming ThiS-thiocarboxylate. This is a step in the synthesis of thiazole, in the thiamine biosynthesis pathway. The sulfur is donated as persulfide by IscS. This is tRNA sulfurtransferase from Aliivibrio salmonicida (strain LFI1238) (Vibrio salmonicida (strain LFI1238)).